The primary structure comprises 91 residues: Small ribosomal subunit protein uS19 (91 aa).

It belongs to the universal ribosomal protein uS19 family.

Functionally, protein S19 forms a complex with S13 that binds strongly to the 16S ribosomal RNA. This chain is Small ribosomal subunit protein uS19, found in Ralstonia nicotianae (strain ATCC BAA-1114 / GMI1000) (Ralstonia solanacearum).